Here is a 175-residue protein sequence, read N- to C-terminus: Ferritin light chain (175 aa).

Ser-2 is modified (N-acetylserine). The region spanning Gln-7 to Ala-156 is the Ferritin-like diiron domain. Glu-54, Glu-58, Glu-61, and Glu-64 together coordinate Fe cation.

This sequence belongs to the ferritin family. In terms of assembly, oligomer of 24 subunits. There are two types of subunits: L (light) chain and H (heavy) chain. The major chain can be light or heavy, depending on the species and tissue type. The functional molecule forms a roughly spherical shell with a diameter of 12 nm and contains a central cavity into which the insoluble mineral iron core is deposited. Interacts with NCOA4.

It localises to the cytoplasmic vesicle. The protein localises to the autophagosome. Its subcellular location is the cytoplasm. The protein resides in the autolysosome. Functionally, stores iron in a soluble, non-toxic, readily available form. Important for iron homeostasis. Iron is taken up in the ferrous form and deposited as ferric hydroxides after oxidation. Also plays a role in delivery of iron to cells. Mediates iron uptake in capsule cells of the developing kidney. Delivery to lysosomes by the cargo receptor NCOA4 for autophagic degradation and release or iron. The protein is Ferritin light chain (FTL) of Bos taurus (Bovine).